Reading from the N-terminus, the 290-residue chain is Appressoria-specific virulence factor GAS2 (290 aa).

The signal sequence occupies residues 1 to 19; it reads MKYTSAILISAFAATNVFA. Asn99 carries N-linked (GlcNAc...) asparagine glycosylation. Positions 121-140 are disordered; sequence LPRAGGGTSTPKGTEETGVK.

It localises to the cytoplasm. Appressoria-specific virulence factor required for appressorial penetration in host and lesion development. The chain is Appressoria-specific virulence factor GAS2 from Pyricularia oryzae (strain 70-15 / ATCC MYA-4617 / FGSC 8958) (Rice blast fungus).